The primary structure comprises 597 residues: NADH-quinone oxidoreductase subunit C/D (597 aa).

Residues 1–188 (MKKEIKRDDV…DPYVLNKYKE (188 aa)) form an NADH dehydrogenase I subunit C region. Residues 211 to 597 (KYMFLNLGPN…IDFVMSDVDR (387 aa)) are NADH dehydrogenase I subunit D.

In the N-terminal section; belongs to the complex I 30 kDa subunit family. It in the C-terminal section; belongs to the complex I 49 kDa subunit family. In terms of assembly, NDH-1 is composed of 13 different subunits. Subunits NuoB, CD, E, F, and G constitute the peripheral sector of the complex.

It localises to the cell inner membrane. The enzyme catalyses a quinone + NADH + 5 H(+)(in) = a quinol + NAD(+) + 4 H(+)(out). Its function is as follows. NDH-1 shuttles electrons from NADH, via FMN and iron-sulfur (Fe-S) centers, to quinones in the respiratory chain. The immediate electron acceptor for the enzyme in this species is believed to be ubiquinone. Couples the redox reaction to proton translocation (for every two electrons transferred, four hydrogen ions are translocated across the cytoplasmic membrane), and thus conserves the redox energy in a proton gradient. This Buchnera aphidicola subsp. Baizongia pistaciae (strain Bp) protein is NADH-quinone oxidoreductase subunit C/D.